A 287-amino-acid polypeptide reads, in one-letter code: Homoserine kinase (287 aa).

ATP is bound at residue 79–89 (PLARGLGSSSS).

It belongs to the GHMP kinase family. Homoserine kinase subfamily.

It is found in the cytoplasm. The enzyme catalyses L-homoserine + ATP = O-phospho-L-homoserine + ADP + H(+). The protein operates within amino-acid biosynthesis; L-threonine biosynthesis; L-threonine from L-aspartate: step 4/5. In terms of biological role, catalyzes the ATP-dependent phosphorylation of L-homoserine to L-homoserine phosphate. The protein is Homoserine kinase of Enterococcus faecalis (strain ATCC 700802 / V583).